The sequence spans 408 residues: Arginine biosynthesis bifunctional protein ArgJ (408 aa).

The substrate site is built by threonine 158, lysine 184, threonine 195, glutamate 281, asparagine 403, and threonine 408. The active-site Nucleophile is threonine 195.

Belongs to the ArgJ family. Heterotetramer of two alpha and two beta chains.

It is found in the cytoplasm. The enzyme catalyses N(2)-acetyl-L-ornithine + L-glutamate = N-acetyl-L-glutamate + L-ornithine. The catalysed reaction is L-glutamate + acetyl-CoA = N-acetyl-L-glutamate + CoA + H(+). The protein operates within amino-acid biosynthesis; L-arginine biosynthesis; L-ornithine and N-acetyl-L-glutamate from L-glutamate and N(2)-acetyl-L-ornithine (cyclic): step 1/1. Its pathway is amino-acid biosynthesis; L-arginine biosynthesis; N(2)-acetyl-L-ornithine from L-glutamate: step 1/4. Catalyzes two activities which are involved in the cyclic version of arginine biosynthesis: the synthesis of N-acetylglutamate from glutamate and acetyl-CoA as the acetyl donor, and of ornithine by transacetylation between N(2)-acetylornithine and glutamate. This Bacillus cereus (strain ZK / E33L) protein is Arginine biosynthesis bifunctional protein ArgJ.